The sequence spans 301 residues: Protoheme IX farnesyltransferase (301 aa).

The next 9 helical transmembrane spans lie at 20–42 (FTEL…GMWL), 55–75 (VDVI…SGAF), 105–125 (ALMV…MTTW), 126–146 (QAGV…SLYA), 150–172 (LVSN…WFAV), 176–198 (FSIV…FYAI), 227–247 (MFFW…LGIV), 249–269 (VILA…GFKM), and 280–300 (FVYS…ISIF).

It belongs to the UbiA prenyltransferase family. Protoheme IX farnesyltransferase subfamily. Interacts with CtaA.

It is found in the cell membrane. The catalysed reaction is heme b + (2E,6E)-farnesyl diphosphate + H2O = Fe(II)-heme o + diphosphate. The protein operates within porphyrin-containing compound metabolism; heme O biosynthesis; heme O from protoheme: step 1/1. Converts heme B (protoheme IX) to heme O by substitution of the vinyl group on carbon 2 of heme B porphyrin ring with a hydroxyethyl farnesyl side group. This Listeria monocytogenes serovar 1/2a (strain ATCC BAA-679 / EGD-e) protein is Protoheme IX farnesyltransferase.